The sequence spans 59 residues: UPF0434 protein GOX0764 (59 aa).

The protein belongs to the UPF0434 family.

The polypeptide is UPF0434 protein GOX0764 (Gluconobacter oxydans (strain 621H) (Gluconobacter suboxydans)).